The sequence spans 185 residues: Ribosome-recycling factor (185 aa).

This sequence belongs to the RRF family.

It localises to the cytoplasm. In terms of biological role, responsible for the release of ribosomes from messenger RNA at the termination of protein biosynthesis. May increase the efficiency of translation by recycling ribosomes from one round of translation to another. This is Ribosome-recycling factor from Nocardioides sp. (strain ATCC BAA-499 / JS614).